The sequence spans 143 residues: MSAPASSSAIAPSQPTAPGHARHSASWSASASDPSGATCAVAPCTSLTPPRTRFDASQLQAHLSSTLAARLRNASWDKSDKDKNRALSRSIAEVIKLKMLEIEPKGFKFIVQVQLVENLGQGGSRPGVSLARHGQCCTGHVFE.

The disordered stretch occupies residues 1–37 (MSAPASSSAIAPSQPTAPGHARHSASWSASASDPSGA).

Belongs to the dynein light chain Tctex-type family.

This is an uncharacterized protein from Mycosarcoma maydis (Corn smut fungus).